The following is a 170-amino-acid chain: Zinc finger A20 and AN1 domain-containing stress-associated protein 6 (170 aa).

The segment at Pro10 to Gln44 adopts an A20-type zinc-finger fold. 4 residues coordinate Zn(2+): Cys16, Cys20, Cys32, and Cys35. Residues Thr53–Pro76 are disordered. An AN1-type zinc finger spans residues Gln105–Gly151. Residues Cys111, Cys114, Cys125, Cys127, Cys132, His135, His141, and Cys143 each coordinate Zn(2+).

Functionally, may be involved in environmental stress response. This chain is Zinc finger A20 and AN1 domain-containing stress-associated protein 6 (SAP6), found in Arabidopsis thaliana (Mouse-ear cress).